The primary structure comprises 215 residues: tRNA (guanine-N(7)-)-methyltransferase (215 aa).

4 residues coordinate S-adenosyl-L-methionine: Glu-44, Glu-69, Asp-96, and Asp-118. Asp-118 is an active-site residue. Lys-122 provides a ligand contact to substrate. The segment at 124–129 (RHEKRR) is interaction with RNA. Substrate-binding positions include Asp-154 and 192–195 (TEYE).

It belongs to the class I-like SAM-binding methyltransferase superfamily. TrmB family.

The enzyme catalyses guanosine(46) in tRNA + S-adenosyl-L-methionine = N(7)-methylguanosine(46) in tRNA + S-adenosyl-L-homocysteine. The protein operates within tRNA modification; N(7)-methylguanine-tRNA biosynthesis. Catalyzes the formation of N(7)-methylguanine at position 46 (m7G46) in tRNA. In Limosilactobacillus fermentum (strain NBRC 3956 / LMG 18251) (Lactobacillus fermentum), this protein is tRNA (guanine-N(7)-)-methyltransferase.